Consider the following 844-residue polypeptide: Aminopeptidase N (844 aa).

Substrate-binding positions include glutamate 120 and 253-257 (GAMEN). Position 289 (histidine 289) interacts with Zn(2+). Glutamate 290 acts as the Proton acceptor in catalysis. Residues histidine 293 and glutamate 312 each coordinate Zn(2+).

Belongs to the peptidase M1 family. As to quaternary structure, monomer. Zn(2+) serves as cofactor.

The protein resides in the cytoplasm. It carries out the reaction Release of an N-terminal amino acid, Xaa-|-Yaa- from a peptide, amide or arylamide. Xaa is preferably Ala, but may be most amino acids including Pro (slow action). When a terminal hydrophobic residue is followed by a prolyl residue, the two may be released as an intact Xaa-Pro dipeptide.. Functionally, aminopeptidase N is involved in the degradation of intracellular peptides generated by protein breakdown during normal growth as well as in response to nutrient starvation. The chain is Aminopeptidase N (pepN) from Lactobacillus helveticus (Lactobacillus suntoryeus).